We begin with the raw amino-acid sequence, 491 residues long: Protein DETOXIFICATION 20 (491 aa).

A run of 12 helical transmembrane segments spans residues 37–57, 75–95, 120–140, 156–176, 185–205, 214–234, 265–285, 296–316, 337–357, 381–401, 413–433, and 438–458; these read LWVVAAPAIFTRYSTFGVSMV, ITFTILLRFSNGILLGMAGAL, IVLTGGTICLMPVFIFAGPIL, LALWVIGINFSFVPSFTCQMF, IISYVTAVSLGLHVFFSWLLV, GAMTSMLIAFWLPIIVQLLYV, GGMLCLELWYNSVLVLLTGNL, AICISINALEMMIALGFLAAV, LIAVFTSLSIGIVLFFVFLFL, LLAFSILLNSVQPVLSGVAIG, LACYYLVGIPIGVILGYVVGL, and VWIGMLFGIFVQTCVLTVMTL.

This sequence belongs to the multi antimicrobial extrusion (MATE) (TC 2.A.66.1) family.

Its subcellular location is the membrane. In Arabidopsis thaliana (Mouse-ear cress), this protein is Protein DETOXIFICATION 20.